A 103-amino-acid chain; its full sequence is Large ribosomal subunit protein bL21 (103 aa).

Belongs to the bacterial ribosomal protein bL21 family. As to quaternary structure, part of the 50S ribosomal subunit. Contacts protein L20.

Its function is as follows. This protein binds to 23S rRNA in the presence of protein L20. The chain is Large ribosomal subunit protein bL21 from Mannheimia succiniciproducens (strain KCTC 0769BP / MBEL55E).